Reading from the N-terminus, the 442-residue chain is Probable xylan O-acetyltransferase 8 (442 aa).

At 1–13 (MVQLPAMKRVKGR) the chain is on the cytoplasmic side. A helical; Signal-anchor for type II membrane protein transmembrane segment spans residues 14–34 (APLSVVVAIIGGLALAGIIFT). Residues 35–442 (EDLRGLTEVK…TWNRLLYAHL (408 aa)) are Lumenal-facing. N-linked (GlcNAc...) asparagine glycosylation occurs at Asn96. 4 disulfide bridges follow: Cys100-Cys151, Cys122-Cys187, Cys131-Cys426, and Cys344-Cys422. The GDS motif signature appears at 174–176 (GDS). Ser176 serves as the catalytic Nucleophile. N-linked (GlcNAc...) asparagine glycosylation is found at Asn217, Asn346, and Asn384. The active-site Proton donor is Asp421. The DXXH motif motif lies at 421–424 (DCIH). His424 functions as the Proton acceptor in the catalytic mechanism.

This sequence belongs to the PC-esterase family. TBL subfamily.

The protein localises to the golgi apparatus membrane. Its function is as follows. Probable xylan acetyltransferase required for 2-O- and 3-O-monoacetylation of xylosyl residues in xylan. Possesses extremely low activity in vitro. This chain is Probable xylan O-acetyltransferase 8, found in Oryza sativa subsp. japonica (Rice).